Here is a 2415-residue protein sequence, read N- to C-terminus: Spectrin alpha chain (2415 aa).

Spectrin repeat units follow at residues 48 to 150 (RFQY…KLQQ), 154 to 254 (LVQF…QEKL), 258 to 362 (HEIQ…KLDE), 366 to 464 (LHRF…DRRI), 471 to 574 (DLQL…LLED), 577 to 679 (RYQQ…KLNE), 683 to 784 (QQQF…QHLL), 788 to 890 (QVQQ…QDLD), and 894 to 963 (QAHQ…RQQE). The SH3 domain maps to 970–1029 (TGKECVVALYDYTEKSPREVSMKKGDVLTLLNSNNKDWWKVEVNDRQGFVPAAYIKKIDA). Phosphoserine is present on residues S1032 and S1034. Spectrin repeat units follow at residues 1079–1177 (VREA…ASQL), 1181–1284 (HEVQ…EKLL), 1287–1391 (YDLQ…QLEQ), 1394–1496 (DLQL…SRLG), 1500–1604 (TLQQ…KLKE), 1608–1710 (QRTY…RLNE), 1714–1816 (LHQF…KLDE), 1820–1921 (YQQF…GALL), 1926–2028 (YLQF…DRLL), 2040–2141 (LYLT…DGEL), and 2154–2252 (LRKE…NLEQ). EF-hand domains lie at 2265–2300 (DSLK…LGYD) and 2308–2343 (QPDP…KETE). Positions 2278, 2280, 2282, 2284, 2289, 2321, 2323, 2325, 2327, and 2332 each coordinate Ca(2+).

Belongs to the spectrin family. As to quaternary structure, native spectrin molecule is a tetramer composed of two antiparallel heterodimers joined head to head so that each end of the native molecule includes the C-terminus of the alpha subunit and the N-terminus of the beta subunit. Interacts with calmodulin in a calcium-dependent manner, interacts with F-actin and also interacts with Lva. Interacts with Ten-m. In terms of tissue distribution, a substantial pool of maternal protein in the egg undergoes dynamic changes in distribution early in embryogenesis. In gastrulated embryo, the highest level of protein is found in the respiratory tract cells and the lowest in parts of the forming gut.

The protein localises to the cytoplasm. It is found in the cytoskeleton. The protein resides in the golgi apparatus. Its subcellular location is the cell projection. It localises to the cilium. The protein localises to the flagellum. Spectrin is the major constituent of the cytoskeletal network underlying the erythrocyte plasma membrane. It associates with band 4.1 and actin to form the cytoskeletal superstructure of the erythrocyte plasma membrane. Essential for larval survival and development. Stabilizes cell to cell interactions that are critical for the maintenance of cell shape and subcellular organization within embryonic tissues. Lva and spectrin may form a Golgi-based scaffold that mediates interaction of Golgi bodies with microtubules and facilitates Golgi-derived membrane secretion required for the formation of furrows during cellularization. The sequence is that of Spectrin alpha chain (alpha-Spec) from Drosophila melanogaster (Fruit fly).